The sequence spans 418 residues: Glutamyl-tRNA reductase (418 aa).

Residues 49–52 (TCNR), Ser-109, 114–116 (EPQ), and Gln-120 each bind substrate. The active-site Nucleophile is the Cys-50. Position 189-194 (189-194 (GAGETI)) interacts with NADP(+).

The protein belongs to the glutamyl-tRNA reductase family. In terms of assembly, homodimer.

It catalyses the reaction (S)-4-amino-5-oxopentanoate + tRNA(Glu) + NADP(+) = L-glutamyl-tRNA(Glu) + NADPH + H(+). Its pathway is porphyrin-containing compound metabolism; protoporphyrin-IX biosynthesis; 5-aminolevulinate from L-glutamyl-tRNA(Glu): step 1/2. Catalyzes the NADPH-dependent reduction of glutamyl-tRNA(Glu) to glutamate 1-semialdehyde (GSA). The sequence is that of Glutamyl-tRNA reductase from Salmonella dublin (strain CT_02021853).